Reading from the N-terminus, the 292-residue chain is Acetylglutamate kinase (292 aa).

Residues 64-65 (GG), arginine 86, and asparagine 190 each bind substrate.

The protein belongs to the acetylglutamate kinase family. ArgB subfamily.

The protein localises to the cytoplasm. It catalyses the reaction N-acetyl-L-glutamate + ATP = N-acetyl-L-glutamyl 5-phosphate + ADP. It functions in the pathway amino-acid biosynthesis; L-arginine biosynthesis; N(2)-acetyl-L-ornithine from L-glutamate: step 2/4. Its function is as follows. Catalyzes the ATP-dependent phosphorylation of N-acetyl-L-glutamate. The protein is Acetylglutamate kinase of Geotalea uraniireducens (strain Rf4) (Geobacter uraniireducens).